We begin with the raw amino-acid sequence, 146 residues long: Angiogenin (146 aa).

Residues Met1–Ala24 form the signal peptide. Gln25 carries the pyrrolidone carboxylic acid modification. The Proton acceptor role is filled by His37. TRNA is bound at residue Arg45. Disulfide bonds link Cys50-Cys105, Cys63-Cys116, and Cys81-Cys131. Positions Arg55–Leu59 match the Nucleolar localization signal motif. TRNA contacts are provided by Cys105 and Ile127. His138 serves as the catalytic Proton donor.

It belongs to the pancreatic ribonuclease family. As to quaternary structure, homodimer. Interacts with RNH1; inhibiting ANG ribonuclease activity. Interacts with PCNA.

Its subcellular location is the secreted. It localises to the nucleus. The protein resides in the nucleolus. The protein localises to the cytoplasm. It is found in the stress granule. With respect to regulation, has weak tRNA ribonuclease activity by itself due to partial autoinhibition by its C-terminus, which folds into a short alpha-helix that partially occludes the substrate-binding site. In absence of stress, the ribonuclease activity is inhibited by RNH1 in the cytoplasm. In response to stress, dissociates from RNH1 in the cytoplasm and associates with cytoplasmic ribosomes with vacant A-sites: ribosomes directly activate the tRNA ribonuclease activity of ANG by refolding the C-terminal alpha-helix. In response to stress, the angiogenic activity of ANG is inhibited by RNH1 in the nucleus. Secreted ribonuclease that can either promote or restrict cell proliferation of target cells, depending on the context. Endocytosed in target cells via its receptor PLXNB2 and translocates to the cytoplasm or nucleus. Under stress conditions, localizes to the cytoplasm and promotes the assembly of stress granules (SGs): specifically cleaves a subset of tRNAs within anticodon loops to produce tRNA-derived stress-induced fragments (tiRNAs), resulting in translation repression and inhibition of cell proliferation. tiRNas also prevent formation of apoptosome, thereby promoting cell survival. Preferentially cleaves RNAs between a pyrimidine and an adenosine residue, suggesting that it cleaves the anticodon loop of tRNA(Ala) (32-UUAGCAU-38) after positions 33 and 36. Cleaves a subset of tRNAs, including tRNA(Ala), tRNA(Glu), tRNA(Gly), tRNA(Lys), tRNA(Val), tRNA(His), tRNA(Asp) and tRNA(Sec). Under growth conditions and in differentiated cells, translocates to the nucleus and stimulates ribosomal RNA (rRNA) transcription, including that containing the initiation site sequences of 45S rRNA, thereby promoting cell growth and proliferation. Angiogenin induces vascularization of normal and malignant tissues via its ability to promote rRNA transcription. Involved in hematopoietic stem and progenitor cell (HSPC) growth and survival by promoting rRNA transcription in growth conditions and inhibiting translation in response to stress, respectively. Mediates the crosstalk between myeloid and intestinal epithelial cells to protect the intestinal epithelial barrier integrity: secreted by myeloid cells and promotes intestinal epithelial cells proliferation and survival. Also mediates osteoclast-endothelial cell crosstalk in growing bone: produced by osteoclasts and protects the neighboring vascular cells against senescence by promoting rRNA transcription. The protein is Angiogenin (ANG) of Rhinopithecus avunculus (Tonkin snub-nosed monkey).